A 154-amino-acid polypeptide reads, in one-letter code: Actin-related protein 2/3 complex subunit 5 (154 aa).

Threonine 142 is modified (phosphothreonine).

It belongs to the ARPC5 family. Component of the Arp2/3 complex composed of ARP2, ARP3, ARC40/p41-ARC, ARC35/p34-ARC, ARC18/p21-ARC, ARC19/p20-ARC and ARC16/p16-ARC.

The protein resides in the cytoplasm. Its subcellular location is the cytoskeleton. It localises to the actin patch. In terms of biological role, functions as a component of the Arp2/3 complex which is involved in regulation of actin polymerization and together with an activating nucleation-promoting factor (NPF) mediates the formation of branched actin networks. The polypeptide is Actin-related protein 2/3 complex subunit 5 (ARC15) (Saccharomyces cerevisiae (strain ATCC 204508 / S288c) (Baker's yeast)).